Consider the following 363-residue polypeptide: 3-dehydroquinate synthase (363 aa).

NAD(+) is bound by residues threonine 134 to threonine 135, lysine 147, and lysine 156. Residues glutamate 189, histidine 254, and histidine 271 each contribute to the Zn(2+) site.

This sequence belongs to the sugar phosphate cyclases superfamily. Dehydroquinate synthase family. Co(2+) is required as a cofactor. Zn(2+) serves as cofactor. It depends on NAD(+) as a cofactor.

The protein resides in the cytoplasm. The enzyme catalyses 7-phospho-2-dehydro-3-deoxy-D-arabino-heptonate = 3-dehydroquinate + phosphate. It participates in metabolic intermediate biosynthesis; chorismate biosynthesis; chorismate from D-erythrose 4-phosphate and phosphoenolpyruvate: step 2/7. Its function is as follows. Catalyzes the conversion of 3-deoxy-D-arabino-heptulosonate 7-phosphate (DAHP) to dehydroquinate (DHQ). In Prochlorococcus marinus (strain MIT 9215), this protein is 3-dehydroquinate synthase.